Here is a 499-residue protein sequence, read N- to C-terminus: RNA polymerase sigma factor SigA (499 aa).

2 stretches are compositionally biased toward basic residues: residues 1–12 (MSSPKKNFKKPQ) and 77–87 (KKRRGRKPKHA). Disordered stretches follow at residues 1–25 (MSSP…LNEE) and 68–89 (QENK…HAPL). The interval 252-322 (LVTSNLRLVV…TRAIADQART (71 aa)) is sigma-70 factor domain-2. The short motif at 276 to 279 (DLIQ) is the Interaction with polymerase core subunit RpoC element. Residues 331–412 (ETINRLAKAE…DTDAQMPDEF (82 aa)) form a sigma-70 factor domain-3 region. A sigma-70 factor domain-4 region spans residues 425-480 (LLNNCLSEQEELIVRMRIGMPPYNETKTLDEVSQKIKIPREKIRQIETKAIRKLRQ). The H-T-H motif DNA-binding region spans 453-472 (LDEVSQKIKIPREKIRQIET).

This sequence belongs to the sigma-70 factor family. RpoD/SigA subfamily. In terms of assembly, interacts transiently with the RNA polymerase catalytic core.

Its subcellular location is the cytoplasm. Functionally, sigma factors are initiation factors that promote the attachment of RNA polymerase to specific initiation sites and are then released. This sigma factor is the primary sigma factor during exponential growth. The sequence is that of RNA polymerase sigma factor SigA from Mycoplasma pneumoniae (strain ATCC 29342 / M129 / Subtype 1) (Mycoplasmoides pneumoniae).